The chain runs to 65 residues: Large ribosomal subunit protein bL35 (65 aa).

The protein belongs to the bacterial ribosomal protein bL35 family.

In Psychrobacter sp. (strain PRwf-1), this protein is Large ribosomal subunit protein bL35.